Consider the following 165-residue polypeptide: MSALSPIPLRRLDPGIPVPTRAHPGDAGVDLCTTEDVVLAPGERVLVGTGIAVALPVGTVGLIHPRSGLAAKTGLSVVNTPGTVDAGYRGEIKVCLINHDPRTPIELRRGDRIAQLLVQRVELVDFVEVEQLDETSRGAGGHGSSGGHASLTPGARSAARVAQEG.

Substrate-binding positions include 66–68, N79, 83–85, and K93; these read RSG and TVD. The segment at 134–165 is disordered; the sequence is ETSRGAGGHGSSGGHASLTPGARSAARVAQEG.

The protein belongs to the dUTPase family. Requires Mg(2+) as cofactor.

The enzyme catalyses dUTP + H2O = dUMP + diphosphate + H(+). It participates in pyrimidine metabolism; dUMP biosynthesis; dUMP from dCTP (dUTP route): step 2/2. Functionally, this enzyme is involved in nucleotide metabolism: it produces dUMP, the immediate precursor of thymidine nucleotides and it decreases the intracellular concentration of dUTP so that uracil cannot be incorporated into DNA. In Nocardia farcinica (strain IFM 10152), this protein is Deoxyuridine 5'-triphosphate nucleotidohydrolase.